The primary structure comprises 408 residues: S-adenosylmethionine synthase (408 aa).

H15 contributes to the ATP binding site. D17 is a binding site for Mg(2+). K(+) is bound at residue E43. L-methionine-binding residues include E56 and Q100. Positions 100–110 are flexible loop; that stretch reads QSPDIAQGVNE. Residues 171-173, 248-249, D257, 263-264, A280, and K284 each bind ATP; these read DGK, KF, and RK. D257 serves as a coordination point for L-methionine. K288 lines the L-methionine pocket.

It belongs to the AdoMet synthase family. Homotetramer; dimer of dimers. Requires Mg(2+) as cofactor. The cofactor is K(+).

It is found in the cytoplasm. It catalyses the reaction L-methionine + ATP + H2O = S-adenosyl-L-methionine + phosphate + diphosphate. Its pathway is amino-acid biosynthesis; S-adenosyl-L-methionine biosynthesis; S-adenosyl-L-methionine from L-methionine: step 1/1. Catalyzes the formation of S-adenosylmethionine (AdoMet) from methionine and ATP. The overall synthetic reaction is composed of two sequential steps, AdoMet formation and the subsequent tripolyphosphate hydrolysis which occurs prior to release of AdoMet from the enzyme. The polypeptide is S-adenosylmethionine synthase (Synechococcus sp. (strain CC9902)).